A 360-amino-acid polypeptide reads, in one-letter code: DNA replication and repair protein RecF (360 aa).

An ATP-binding site is contributed by 33 to 40 (GENGSGKT).

The protein belongs to the RecF family.

It localises to the cytoplasm. In terms of biological role, the RecF protein is involved in DNA metabolism; it is required for DNA replication and normal SOS inducibility. RecF binds preferentially to single-stranded, linear DNA. It also seems to bind ATP. This is DNA replication and repair protein RecF from Rickettsia conorii (strain ATCC VR-613 / Malish 7).